Consider the following 238-residue polypeptide: 2-C-methyl-D-erythritol 4-phosphate cytidylyltransferase (238 aa).

Belongs to the IspD/TarI cytidylyltransferase family. IspD subfamily.

It carries out the reaction 2-C-methyl-D-erythritol 4-phosphate + CTP + H(+) = 4-CDP-2-C-methyl-D-erythritol + diphosphate. Its pathway is isoprenoid biosynthesis; isopentenyl diphosphate biosynthesis via DXP pathway; isopentenyl diphosphate from 1-deoxy-D-xylulose 5-phosphate: step 2/6. In terms of biological role, catalyzes the formation of 4-diphosphocytidyl-2-C-methyl-D-erythritol from CTP and 2-C-methyl-D-erythritol 4-phosphate (MEP). In Alteromonas mediterranea (strain DSM 17117 / CIP 110805 / LMG 28347 / Deep ecotype), this protein is 2-C-methyl-D-erythritol 4-phosphate cytidylyltransferase.